The chain runs to 132 residues: Small ribosomal subunit protein uS8 (132 aa).

The protein belongs to the universal ribosomal protein uS8 family. In terms of assembly, part of the 30S ribosomal subunit. Contacts proteins S5 and S12.

Its function is as follows. One of the primary rRNA binding proteins, it binds directly to 16S rRNA central domain where it helps coordinate assembly of the platform of the 30S subunit. The sequence is that of Small ribosomal subunit protein uS8 from Mycobacterium avium (strain 104).